The primary structure comprises 302 residues: 1,2-dihydroxynaphthalene dioxygenase (302 aa).

2 consecutive VOC domains span residues 9-124 and 149-270; these read ELGY…IFWG and GLGH…PGWR. Residue H152 participates in Fe cation binding. Residues H152, 199 to 200, H215, and Y256 each bind substrate; that span reads DH. H215 lines the Fe cation pocket. E266 contributes to the Fe cation binding site.

The protein belongs to the extradiol ring-cleavage dioxygenase family. It depends on Fe(2+) as a cofactor.

It carries out the reaction naphthalene-1,2-diol + O2 = 2-hydroxychromene-2-carboxylate + H(+). Its pathway is aromatic compound metabolism; naphthalene degradation. Its function is as follows. Involved in the naphthalene catabolic pathway. Catalyzes the meta-cleavage of 1,2-dihydroxynaphthalene (1,2-DHN) to yield 2-hydroxychromene-2-carboxylic acid. The chain is 1,2-dihydroxynaphthalene dioxygenase (nahC) from Pseudomonas putida (Arthrobacter siderocapsulatus).